Reading from the N-terminus, the 566-residue chain is Mucin-21 (566 aa).

A signal peptide spans 1–24 (MKMQKGNVLLMFGLLLHLEAATNS). An N-linked (GlcNAc...) asparagine glycan is attached at Asn-25. Residues 25–68 (NETSTSANTGSSVISSGASTATNSGSSVTSSGVSTATISGSSVT) form a disordered region. Over 25 to 479 (NETSTSANTG…KPGGSLVPWE (455 aa)) the chain is Extracellular. Tandem repeats lie at residues 31–44 (ANTGSSVISSGAST), 45–59 (ATNSGSSVTSSGVST), 60–74 (ATISGSSVTSNGVSI), 75–89 (VTNSEFHTTSSGIST), 90–104 (ATNSEFSTVSSGISI), 105–119 (ATNSESSTTSSGAST), 120–134 (ATNSESSTPSSGAST), 135–149 (ATNSDSSTTSSGAST), 150–164 (ATNSDSSTTSSEAST), 165–179 (ATNSESSTTSSGAST), 180–194 (ATNSESSTVSSRAST), 195–209 (ATNSESSTTSSGAST), 210–224 (ATNSESRTTSNGAGT), 225–239 (ATNSESSTTSSGAST), 244–254 (ESSTPSSGAGT), 255–269 (ATNSESSTTSSGAGT), 270–284 (ATNSESSTVSSGIST), 285–299 (VTNSESSTPSSGANT), 300–314 (ATNSESSTTSSGANT), 315–329 (ATNSDSSTTSSGAST), 330–344 (ATNSESSTTSSGAST), 345–359 (ATNSESSTTSSGAST), 360–374 (ATNSGSSTTSSGTST), 375–389 (ATNSESSTVSSGAST), 390–404 (ATTSESSTTSSGAST), 405–419 (ATNSESSTVSSGAST), 420–434 (ATNSESSTTSSGANT), and 435–449 (ATNSGSSVTSAGSGT). The interval 31–435 (ANTGSSVISS…STTSSGANTA (405 aa)) is 28 X 15 AA approximate tandem repeats. The segment at 106–456 (TNSESSTTSS…SGTAALTGMH (351 aa)) is disordered. A helical transmembrane segment spans residues 480–500 (IFLITLVSVVAAVGLFAGLFF). Residues 501–566 (CVRNSLSLRN…MEMSGRNSGP (66 aa)) are Cytoplasmic-facing. The interval 521–566 (GLNHGLGPGPGGNHGAPHRPRWSPNWFWRRPVSSIAMEMSGRNSGP) is cytoplasmic tail.

Post-translationally, O-glycosylated. In terms of tissue distribution, expressed in lung, large intestine, thymus, and testis. Expressed in normal and malignant bronchial epithelial cells.

The protein localises to the cell membrane. This is Mucin-21 (MUC21) from Homo sapiens (Human).